The chain runs to 184 residues: ATP-dependent protease subunit HslV (184 aa).

Thr12 is an active-site residue. Residues Ala166, Cys169, and Thr172 each contribute to the Na(+) site.

This sequence belongs to the peptidase T1B family. HslV subfamily. As to quaternary structure, a double ring-shaped homohexamer of HslV is capped on each side by a ring-shaped HslU homohexamer. The assembly of the HslU/HslV complex is dependent on binding of ATP.

It is found in the cytoplasm. The enzyme catalyses ATP-dependent cleavage of peptide bonds with broad specificity.. Its activity is regulated as follows. Allosterically activated by HslU binding. Protease subunit of a proteasome-like degradation complex believed to be a general protein degrading machinery. The polypeptide is ATP-dependent protease subunit HslV (Brucella anthropi (strain ATCC 49188 / DSM 6882 / CCUG 24695 / JCM 21032 / LMG 3331 / NBRC 15819 / NCTC 12168 / Alc 37) (Ochrobactrum anthropi)).